The primary structure comprises 161 residues: Disulfide bond formation protein B (161 aa).

The Cytoplasmic portion of the chain corresponds to 1–8 (MQANSRTY). The chain crosses the membrane as a helical span at residues 9 to 25 (FLLIAIVSFAMVGAALY). Residues 26-43 (MQYAENLQPCPLCIMQRF) are Periplasmic-facing. Residues cysteine 35 and cysteine 38 are joined by a disulfide bond. Residues 44 to 58 (AFIGIGIFSLLAVIA) form a helical membrane-spanning segment. Residues 59–63 (QNTRT) are Cytoplasmic-facing. A helical membrane pass occupies residues 64 to 81 (LWQGLGMLSGVGGIAVAG). At 82 to 136 (YQVALLMNPKASCGIDPLENWVNSLPTAKLLPQVFYSDGLCTAPTPPILGLSIPA) the chain is on the periplasmic side. Cysteine 94 and cysteine 122 form a disulfide bridge. The chain crosses the membrane as a helical span at residues 137-155 (WSLIWLLILTLTLAVGLIR). Topologically, residues 156-161 (REKHFR) are cytoplasmic.

This sequence belongs to the DsbB family.

Its subcellular location is the cell inner membrane. Functionally, required for disulfide bond formation in some periplasmic proteins. Acts by oxidizing the DsbA protein. The chain is Disulfide bond formation protein B from Cupriavidus metallidurans (strain ATCC 43123 / DSM 2839 / NBRC 102507 / CH34) (Ralstonia metallidurans).